Here is a 938-residue protein sequence, read N- to C-terminus: Isoleucine--tRNA ligase (938 aa).

The 'HIGH' region motif lies at 58–68 (PYANGNIHIGH). Glu561 is a binding site for L-isoleucyl-5'-AMP. The short motif at 602–606 (KMSKS) is the 'KMSKS' region element. ATP is bound at residue Lys605. Residues Cys901, Cys904, Cys921, and Cys924 each contribute to the Zn(2+) site.

Belongs to the class-I aminoacyl-tRNA synthetase family. IleS type 1 subfamily. Monomer. Requires Zn(2+) as cofactor.

Its subcellular location is the cytoplasm. The enzyme catalyses tRNA(Ile) + L-isoleucine + ATP = L-isoleucyl-tRNA(Ile) + AMP + diphosphate. In terms of biological role, catalyzes the attachment of isoleucine to tRNA(Ile). As IleRS can inadvertently accommodate and process structurally similar amino acids such as valine, to avoid such errors it has two additional distinct tRNA(Ile)-dependent editing activities. One activity is designated as 'pretransfer' editing and involves the hydrolysis of activated Val-AMP. The other activity is designated 'posttransfer' editing and involves deacylation of mischarged Val-tRNA(Ile). The polypeptide is Isoleucine--tRNA ligase (Yersinia pestis bv. Antiqua (strain Angola)).